Consider the following 356-residue polypeptide: DNA polymerase IV (356 aa).

The UmuC domain maps to 6–187; the sequence is IIHIDMDYFF…LDIGDFPGVG (182 aa). The Mg(2+) site is built by Asp-10 and Asp-105. The active site involves Glu-106.

Belongs to the DNA polymerase type-Y family. As to quaternary structure, monomer. Mg(2+) is required as a cofactor.

Its subcellular location is the cytoplasm. It carries out the reaction DNA(n) + a 2'-deoxyribonucleoside 5'-triphosphate = DNA(n+1) + diphosphate. Its function is as follows. Poorly processive, error-prone DNA polymerase involved in untargeted mutagenesis. Copies undamaged DNA at stalled replication forks, which arise in vivo from mismatched or misaligned primer ends. These misaligned primers can be extended by PolIV. Exhibits no 3'-5' exonuclease (proofreading) activity. May be involved in translesional synthesis, in conjunction with the beta clamp from PolIII. The chain is DNA polymerase IV from Staphylococcus epidermidis (strain ATCC 12228 / FDA PCI 1200).